A 216-amino-acid chain; its full sequence is Large ribosomal subunit protein uL3 (216 aa).

The tract at residues 136-155 (GVSISHRSHGSTGQRQDPGK) is disordered. N5-methylglutamine is present on Q151.

Belongs to the universal ribosomal protein uL3 family. Part of the 50S ribosomal subunit. Forms a cluster with proteins L14 and L19. In terms of processing, methylated by PrmB.

Functionally, one of the primary rRNA binding proteins, it binds directly near the 3'-end of the 23S rRNA, where it nucleates assembly of the 50S subunit. The polypeptide is Large ribosomal subunit protein uL3 (Rickettsia prowazekii (strain Madrid E)).